Consider the following 161-residue polypeptide: Protein lin-52 (161 aa).

Residues 137 to 161 (TGSASPRYLQPTPPKNVAEETTGSQ) are disordered.

This sequence belongs to the lin-52 family. In terms of assembly, component of the DRM complex, at least composed of lin-9, lin-35, lin-37, lin-52, lin-53, lin-54- dpl-1 and efl-1. Interacts with zft-11; the interaction is required to suppress the activation of non-neuronal genes in neurons.

It localises to the nucleus. Synthetic multivulva class B (synMuvB) protein. SynMuvB proteins are required to repress the induction of vulval development by Ras signaling and probably act by forming the multiprotein DRM complex that represses transcription. In association with the zinc finger protein ztf-11, negatively regulates the expression of non-neuronal genes during neurogenesis. This Caenorhabditis elegans protein is Protein lin-52.